The chain runs to 87 residues: Small ribosomal subunit protein uS15 (87 aa).

It belongs to the universal ribosomal protein uS15 family. As to quaternary structure, part of the 30S ribosomal subunit. Forms a bridge to the 50S subunit in the 70S ribosome, contacting the 23S rRNA.

One of the primary rRNA binding proteins, it binds directly to 16S rRNA where it helps nucleate assembly of the platform of the 30S subunit by binding and bridging several RNA helices of the 16S rRNA. Functionally, forms an intersubunit bridge (bridge B4) with the 23S rRNA of the 50S subunit in the ribosome. The sequence is that of Small ribosomal subunit protein uS15 from Clostridium perfringens (strain ATCC 13124 / DSM 756 / JCM 1290 / NCIMB 6125 / NCTC 8237 / Type A).